A 229-amino-acid polypeptide reads, in one-letter code: Ribulose-phosphate 3-epimerase (229 aa).

Serine 12 is a substrate binding site. 3 residues coordinate a divalent metal cation: histidine 37, aspartate 39, and histidine 70. The Proton acceptor role is filled by aspartate 39. Substrate-binding positions include histidine 70, glycine 146 to glycine 149, aspartate 181 to glycine 183, and alanine 203 to serine 204. Residue aspartate 181 participates in a divalent metal cation binding. Aspartate 181 serves as the catalytic Proton donor.

Belongs to the ribulose-phosphate 3-epimerase family. Requires a divalent metal cation as cofactor.

The catalysed reaction is D-ribulose 5-phosphate = D-xylulose 5-phosphate. It functions in the pathway carbohydrate degradation. Functionally, catalyzes the reversible epimerization of D-ribulose 5-phosphate to D-xylulose 5-phosphate. This Chlamydia pneumoniae (Chlamydophila pneumoniae) protein is Ribulose-phosphate 3-epimerase.